A 100-amino-acid polypeptide reads, in one-letter code: Class II hydrophobin CU (100 aa).

The first 25 residues, 1–25 (MQFSIATIALFLSSAMAAPYSGNSN), serve as a signal peptide directing secretion. 4 disulfides stabilise this stretch: C32–C82, C42–C72, C43–C55, and C83–C94.

This sequence belongs to the cerato-ulmin hydrophobin family. As to quaternary structure, homotetramer. Further self-assembles to form highly ordered films at water-air interfaces through intermolecular interactions.

It is found in the secreted. The protein resides in the cell wall. In terms of biological role, aerial growth, conidiation, and dispersal of filamentous fungi in the environment rely upon a capability of their secreting small amphipathic proteins called hydrophobins (HPBs) with low sequence identity. Class I can self-assemble into an outermost layer of rodlet bundles on aerial cell surfaces, conferring cellular hydrophobicity that supports fungal growth, development and dispersal; whereas Class II form highly ordered films at water-air interfaces through intermolecular interactions but contribute nothing to the rodlet structure. CU is a class II hydrophobin that is implicated in the pathogenicity of this fungus on elm trees. Required for hydrophobicity and adherence of the cells and acts as a parasitic fitness factor by protecting infectious propagules from desiccation. Reduces the interfacial tension of both oil-water and air-water interfaces. The chain is Class II hydrophobin CU from Ophiostoma ulmi (Dutch elm disease fungus).